The following is a 276-amino-acid chain: NAC domain-containing protein 67 (276 aa).

Residues 17-170 (LPPGFRFHPT…DWVLCRLYNK (154 aa)) enclose the NAC domain.

As to expression, expressed in leaf blades.

The protein resides in the nucleus. Probable transcription factor involved in stress response. The chain is NAC domain-containing protein 67 from Oryza sativa subsp. japonica (Rice).